A 93-amino-acid chain; its full sequence is Beta-defensin 128 (93 aa).

Positions 1-18 are cleaved as a signal peptide; the sequence is MKLFLVLIILLFEVLTDG. 3 disulfide bridges follow: Cys24/Cys52, Cys32/Cys46, and Cys36/Cys53.

It belongs to the beta-defensin family.

It localises to the secreted. In terms of biological role, has antibacterial activity. This Homo sapiens (Human) protein is Beta-defensin 128 (DEFB128).